The chain runs to 295 residues: GTP cyclohydrolase FolE2 (295 aa).

It belongs to the GTP cyclohydrolase IV family.

The enzyme catalyses GTP + H2O = 7,8-dihydroneopterin 3'-triphosphate + formate + H(+). The protein operates within cofactor biosynthesis; 7,8-dihydroneopterin triphosphate biosynthesis; 7,8-dihydroneopterin triphosphate from GTP: step 1/1. In terms of biological role, converts GTP to 7,8-dihydroneopterin triphosphate. The sequence is that of GTP cyclohydrolase FolE2 from Pseudomonas putida (strain W619).